The following is a 345-amino-acid chain: Tetraacyldisaccharide 4'-kinase (345 aa).

Residue 61–68 (TAGGTGKT) coordinates ATP.

It belongs to the LpxK family.

The catalysed reaction is a lipid A disaccharide + ATP = a lipid IVA + ADP + H(+). Its pathway is glycolipid biosynthesis; lipid IV(A) biosynthesis; lipid IV(A) from (3R)-3-hydroxytetradecanoyl-[acyl-carrier-protein] and UDP-N-acetyl-alpha-D-glucosamine: step 6/6. Functionally, transfers the gamma-phosphate of ATP to the 4'-position of a tetraacyldisaccharide 1-phosphate intermediate (termed DS-1-P) to form tetraacyldisaccharide 1,4'-bis-phosphate (lipid IVA). The chain is Tetraacyldisaccharide 4'-kinase from Xanthomonas axonopodis pv. citri (strain 306).